The primary structure comprises 660 residues: Macrolide export ATP-binding/permease protein MacB (660 aa).

An ABC transporter domain is found at 10–248 (LVLENIVRKF…AKGQALQGKQ (239 aa)). 46-53 (GASGSGKS) lines the ATP pocket. A run of 4 helical transmembrane segments spans residues 285 to 305 (FLTMLGVIIGIAAIIAMVALG), 532 to 552 (ILTLLVSSIAAISLIVGGIGV), 593 to 613 (IIGGGVGILFGLSIGGLFVLF), and 625 to 645 (SIIISLTFSTLIGICFGFSPA).

The protein belongs to the ABC transporter superfamily. Macrolide exporter (TC 3.A.1.122) family. As to quaternary structure, homodimer.

The protein resides in the cell inner membrane. Functionally, non-canonical ABC transporter that contains transmembrane domains (TMD), which form a pore in the inner membrane, and an ATP-binding domain (NBD), which is responsible for energy generation. Confers resistance against macrolides. The sequence is that of Macrolide export ATP-binding/permease protein MacB from Bartonella quintana (strain Toulouse) (Rochalimaea quintana).